A 379-amino-acid chain; its full sequence is Dihydroorotate dehydrogenase (quinone) (379 aa).

Residues 79–83 and A103 each bind FMN; that span reads AGCDK. Substrate is bound at residue K83. Substrate is bound at residue 128-131; that stretch reads NRLG. Positions 160 and 193 each coordinate FMN. Position 193 (N193) interacts with substrate. The active-site Nucleophile is the S196. Residue N198 coordinates substrate. FMN-binding residues include K231 and T259. Position 260 to 261 (260 to 261) interacts with substrate; it reads NT. FMN contacts are provided by residues G289, G318, and 339–340; that span reads YT.

The protein belongs to the dihydroorotate dehydrogenase family. Type 2 subfamily. As to quaternary structure, monomer. FMN serves as cofactor.

It is found in the cell membrane. It catalyses the reaction (S)-dihydroorotate + a quinone = orotate + a quinol. The protein operates within pyrimidine metabolism; UMP biosynthesis via de novo pathway; orotate from (S)-dihydroorotate (quinone route): step 1/1. Functionally, catalyzes the conversion of dihydroorotate to orotate with quinone as electron acceptor. This is Dihydroorotate dehydrogenase (quinone) from Crocosphaera subtropica (strain ATCC 51142 / BH68) (Cyanothece sp. (strain ATCC 51142)).